Reading from the N-terminus, the 237-residue chain is Pyridoxal phosphate homeostasis protein (237 aa).

N6-(pyridoxal phosphate)lysine is present on Lys-35.

Belongs to the pyridoxal phosphate-binding protein YggS/PROSC family.

Functionally, pyridoxal 5'-phosphate (PLP)-binding protein, which is involved in PLP homeostasis. This chain is Pyridoxal phosphate homeostasis protein, found in Haemophilus influenzae (strain ATCC 51907 / DSM 11121 / KW20 / Rd).